The primary structure comprises 238 residues: Phosphoribosylaminoimidazole-succinocarboxamide synthase (238 aa).

Belongs to the SAICAR synthetase family.

It catalyses the reaction 5-amino-1-(5-phospho-D-ribosyl)imidazole-4-carboxylate + L-aspartate + ATP = (2S)-2-[5-amino-1-(5-phospho-beta-D-ribosyl)imidazole-4-carboxamido]succinate + ADP + phosphate + 2 H(+). Its pathway is purine metabolism; IMP biosynthesis via de novo pathway; 5-amino-1-(5-phospho-D-ribosyl)imidazole-4-carboxamide from 5-amino-1-(5-phospho-D-ribosyl)imidazole-4-carboxylate: step 1/2. The sequence is that of Phosphoribosylaminoimidazole-succinocarboxamide synthase from Methanococcoides burtonii (strain DSM 6242 / NBRC 107633 / OCM 468 / ACE-M).